Reading from the N-terminus, the 315-residue chain is Methionyl-tRNA formyltransferase (315 aa).

Residue 113–116 (SLLP) coordinates (6S)-5,6,7,8-tetrahydrofolate.

Belongs to the Fmt family.

It carries out the reaction L-methionyl-tRNA(fMet) + (6R)-10-formyltetrahydrofolate = N-formyl-L-methionyl-tRNA(fMet) + (6S)-5,6,7,8-tetrahydrofolate + H(+). In terms of biological role, attaches a formyl group to the free amino group of methionyl-tRNA(fMet). The formyl group appears to play a dual role in the initiator identity of N-formylmethionyl-tRNA by promoting its recognition by IF2 and preventing the misappropriation of this tRNA by the elongation apparatus. The chain is Methionyl-tRNA formyltransferase from Yersinia enterocolitica serotype O:8 / biotype 1B (strain NCTC 13174 / 8081).